Consider the following 348-residue polypeptide: Methylthioribose-1-phosphate isomerase (348 aa).

Residues 46-48 (RGA), arginine 88, and glutamine 194 each bind substrate. The active-site Proton donor is aspartate 235. 245 to 246 (NK) lines the substrate pocket.

It belongs to the eIF-2B alpha/beta/delta subunits family. MtnA subfamily.

It carries out the reaction 5-(methylsulfanyl)-alpha-D-ribose 1-phosphate = 5-(methylsulfanyl)-D-ribulose 1-phosphate. It functions in the pathway amino-acid biosynthesis; L-methionine biosynthesis via salvage pathway; L-methionine from S-methyl-5-thio-alpha-D-ribose 1-phosphate: step 1/6. Its function is as follows. Catalyzes the interconversion of methylthioribose-1-phosphate (MTR-1-P) into methylthioribulose-1-phosphate (MTRu-1-P). This is Methylthioribose-1-phosphate isomerase from Desulforudis audaxviator (strain MP104C).